A 440-amino-acid polypeptide reads, in one-letter code: MSAAPTSGPLTCRRAGPLRGAIEVPGDKSISHRSLLFGALSTGETRVTGLLDAEDVHSTRKAVEALGAIVREEGGEVVVTPPATLREPGDVIDCGNSGTSLRLLTGVLSGVPGLSVLTGDASLRRRPVRRVIDPLRAMGANLSARDGDRLPPVVVRGGPLRGARQVLPVASAQVKSAILLAGLFAEGETTVVEPEKSRDHTERMLRGMGVPVKVSGLEVSVSAARPAGGRVDVPGDISSAAFFLCGAAALPGSEVTVRNLGVNETRTGLLDVLRAMGADVWLANLREVAGEPRADVTVRADRLEATEIRGATIPRLIDELPVVMVMATQARGRTVIRDAKELRVKESDRLAAMGETLARAGARIELYEDGCAIEGPTPLRGVEVRTRLDHRIAMSMAVAQLFCGGEPVVLDDVACVATSFPSFFRLLDQVAARVSVGGAP.

Residues lysine 28, serine 29, and arginine 33 each contribute to the 3-phosphoshikimate site. Residue lysine 28 participates in phosphoenolpyruvate binding. Phosphoenolpyruvate contacts are provided by glycine 98 and arginine 126. Residues serine 171, glutamine 173, aspartate 318, and lysine 345 each coordinate 3-phosphoshikimate. Glutamine 173 is a phosphoenolpyruvate binding site. Aspartate 318 acts as the Proton acceptor in catalysis. The phosphoenolpyruvate site is built by arginine 349 and arginine 391.

It belongs to the EPSP synthase family. In terms of assembly, monomer.

It is found in the cytoplasm. It catalyses the reaction 3-phosphoshikimate + phosphoenolpyruvate = 5-O-(1-carboxyvinyl)-3-phosphoshikimate + phosphate. Its pathway is metabolic intermediate biosynthesis; chorismate biosynthesis; chorismate from D-erythrose 4-phosphate and phosphoenolpyruvate: step 6/7. Its function is as follows. Catalyzes the transfer of the enolpyruvyl moiety of phosphoenolpyruvate (PEP) to the 5-hydroxyl of shikimate-3-phosphate (S3P) to produce enolpyruvyl shikimate-3-phosphate and inorganic phosphate. This chain is 3-phosphoshikimate 1-carboxyvinyltransferase, found in Anaeromyxobacter dehalogenans (strain 2CP-C).